We begin with the raw amino-acid sequence, 440 residues long: Gap junction alpha-8 protein (440 aa).

Residues 2–12 lie within the membrane without spanning it; sequence GDWSFLGNILE. At 13–21 the chain is on the cytoplasmic side; it reads EVNEHSTVI. The chain crosses the membrane as a helical span at residues 22 to 42; that stretch reads GRVWLTVLFIFRILILGTAAE. The Extracellular portion of the chain corresponds to 43–71; it reads FVWGDEQSDFVCNTQQPGCENVCYDEAFP. 3 disulfide bridges follow: Cys-54–Cys-201, Cys-61–Cys-195, and Cys-65–Cys-190. A helical transmembrane segment spans residues 72-92; the sequence is ISHIRLWVLQIIFVSTPSLVY. Topologically, residues 93–161 are cytoplasmic; the sequence is VGHAVHHVRM…GTLLRTYVCH (69 aa). The segment at 108–144 is disordered; that stretch reads EREAEELSQQSPGNGGERAPLAADQGSVKKSSSSSKG. Residues 162 to 182 form a helical membrane-spanning segment; the sequence is IIFKTLFEVGFIVGHYFLYGF. At 183-210 the chain is on the extracellular side; the sequence is RILPLYRCSRWPCPNVVDCFVSRPTEKT. The helical transmembrane segment at 211 to 231 threads the bilayer; the sequence is IFILFMLSVASVSLFLNILEM. Over 232-440 the chain is Cytoplasmic; that stretch reads SHLGLKKIRS…SRARSDDLTV (209 aa). Positions 334–440 are disordered; that stretch reads GAQEGVEEEQ…SRARSDDLTV (107 aa). 2 stretches are compositionally biased toward basic and acidic residues: residues 353-365 and 375-405; these read VGDK…RVST and EEEK…ELTP. Over residues 423–432 the composition is skewed to low complexity; it reads LSRLSKASSR.

Belongs to the connexin family. Alpha-type (group II) subfamily. A hemichannel or connexon is composed of a hexamer of connexins. A functional gap junction is formed by the apposition of two hemichannels. Forms heteromeric channels with GJA3. In terms of tissue distribution, detected in eye lens (at protein level). Eye lens.

It is found in the cell membrane. The protein localises to the cell junction. The protein resides in the gap junction. In terms of biological role, structural component of eye lens gap junctions. Gap junctions are dodecameric channels that connect the cytoplasm of adjoining cells. They are formed by the docking of two hexameric hemichannels, one from each cell membrane. Small molecules and ions diffuse from one cell to a neighboring cell via the central pore. This is Gap junction alpha-8 protein (GJA8) from Ovis aries (Sheep).